Reading from the N-terminus, the 233-residue chain is 3-dehydroquinate dehydratase (233 aa).

3-dehydroquinate contacts are provided by residues 34–36 (ELR) and Arg64. His118 functions as the Proton donor/acceptor in the catalytic mechanism. The active-site Schiff-base intermediate with substrate is Lys145. 3 residues coordinate 3-dehydroquinate: Arg185, Ser205, and Gln209.

Belongs to the type-I 3-dehydroquinase family. In terms of assembly, homodimer.

It carries out the reaction 3-dehydroquinate = 3-dehydroshikimate + H2O. It participates in metabolic intermediate biosynthesis; chorismate biosynthesis; chorismate from D-erythrose 4-phosphate and phosphoenolpyruvate: step 3/7. Involved in the third step of the chorismate pathway, which leads to the biosynthesis of aromatic amino acids. Catalyzes the cis-dehydration of 3-dehydroquinate (DHQ) and introduces the first double bond of the aromatic ring to yield 3-dehydroshikimate. The sequence is that of 3-dehydroquinate dehydratase from Coxiella burnetii (strain CbuK_Q154) (Coxiella burnetii (strain Q154)).